The chain runs to 587 residues: Pectinesterase 2 (587 aa).

The N-terminal stretch at 1–40 (MAPIKEFISKFSDFKNNKKLILSSAAIALLLLASIVGIAA) is a signal peptide. N-linked (GlcNAc...) asparagine glycans are attached at residues asparagine 99 and asparagine 218. Residues threonine 351 and glutamine 381 each coordinate substrate. Residue aspartate 404 is the Proton donor of the active site. A disulfide bridge connects residues cysteine 418 and cysteine 438. Aspartate 425 acts as the Nucleophile in catalysis. Residues arginine 493 and tryptophan 495 each contribute to the substrate site.

The protein in the N-terminal section; belongs to the PMEI family. It in the C-terminal section; belongs to the pectinesterase family. As to expression, expressed in flower buds.

It is found in the secreted. It localises to the cell wall. The catalysed reaction is [(1-&gt;4)-alpha-D-galacturonosyl methyl ester](n) + n H2O = [(1-&gt;4)-alpha-D-galacturonosyl](n) + n methanol + n H(+). The protein operates within glycan metabolism; pectin degradation; 2-dehydro-3-deoxy-D-gluconate from pectin: step 1/5. Its function is as follows. Acts in the modification of cell walls via demethylesterification of cell wall pectin. The protein is Pectinesterase 2 (PME2) of Arabidopsis thaliana (Mouse-ear cress).